The primary structure comprises 79 residues: Sulfur carrier protein TusA (79 aa).

Cysteine 15 acts as the Cysteine persulfide intermediate in catalysis.

It belongs to the sulfur carrier protein TusA family. In terms of assembly, interacts with IscS.

The protein localises to the cytoplasm. It participates in tRNA modification. Its function is as follows. Sulfur carrier protein involved in sulfur trafficking in the cell. Part of a sulfur-relay system required for 2-thiolation during synthesis of 2-thiouridine of the modified wobble base 5-methylaminomethyl-2-thiouridine (mnm(5)s(2)U) in tRNA. Interacts with IscS and stimulates its cysteine desulfurase activity. Accepts an activated sulfur from IscS, which is then transferred to TusD, and thus determines the direction of sulfur flow from IscS to 2-thiouridine formation. Also appears to be involved in sulfur transfer for the biosynthesis of molybdopterin. In Buchnera aphidicola subsp. Baizongia pistaciae (strain Bp), this protein is Sulfur carrier protein TusA.